The chain runs to 491 residues: 3-octaprenyl-4-hydroxybenzoate carboxy-lyase (491 aa).

N172 lines the Mn(2+) pocket. Residues I175–R177, R189–L191, and R194–G195 contribute to the prenylated FMN site. Position 238 (E238) interacts with Mn(2+). The Proton donor role is filled by D287.

The protein belongs to the UbiD family. In terms of assembly, homohexamer. The cofactor is prenylated FMN. Mn(2+) serves as cofactor.

It is found in the cell membrane. It carries out the reaction a 4-hydroxy-3-(all-trans-polyprenyl)benzoate + H(+) = a 2-(all-trans-polyprenyl)phenol + CO2. Its pathway is cofactor biosynthesis; ubiquinone biosynthesis. Catalyzes the decarboxylation of 3-octaprenyl-4-hydroxy benzoate to 2-octaprenylphenol, an intermediate step in ubiquinone biosynthesis. The chain is 3-octaprenyl-4-hydroxybenzoate carboxy-lyase from Histophilus somni (strain 2336) (Haemophilus somnus).